Reading from the N-terminus, the 209-residue chain is Large ribosomal subunit protein uL3 (209 aa).

An N5-methylglutamine modification is found at Q150.

It belongs to the universal ribosomal protein uL3 family. Part of the 50S ribosomal subunit. Forms a cluster with proteins L14 and L19. Methylated by PrmB.

Functionally, one of the primary rRNA binding proteins, it binds directly near the 3'-end of the 23S rRNA, where it nucleates assembly of the 50S subunit. This is Large ribosomal subunit protein uL3 from Klebsiella pneumoniae (strain 342).